The following is a 315-amino-acid chain: Acetyl-coenzyme A carboxylase carboxyl transferase subunit beta, chloroplastic (315 aa).

In terms of domain architecture, CoA carboxyltransferase N-terminal spans 47–315 (LWTRCDSCEN…VYKESNSYLF (269 aa)). Zn(2+) is bound by residues Cys-51, Cys-54, Cys-70, and Cys-73. Residues 51–73 (CDSCENMLYVRFLKQNKRICEEC) form a C4-type zinc finger.

This sequence belongs to the AccD/PCCB family. As to quaternary structure, acetyl-CoA carboxylase is a heterohexamer composed of biotin carboxyl carrier protein, biotin carboxylase and 2 subunits each of ACCase subunit alpha and ACCase plastid-coded subunit beta (accD). Requires Zn(2+) as cofactor.

It localises to the plastid. It is found in the chloroplast stroma. It carries out the reaction N(6)-carboxybiotinyl-L-lysyl-[protein] + acetyl-CoA = N(6)-biotinyl-L-lysyl-[protein] + malonyl-CoA. It participates in lipid metabolism; malonyl-CoA biosynthesis; malonyl-CoA from acetyl-CoA: step 1/1. Its function is as follows. Component of the acetyl coenzyme A carboxylase (ACC) complex. Biotin carboxylase (BC) catalyzes the carboxylation of biotin on its carrier protein (BCCP) and then the CO(2) group is transferred by the transcarboxylase to acetyl-CoA to form malonyl-CoA. The protein is Acetyl-coenzyme A carboxylase carboxyl transferase subunit beta, chloroplastic of Physcomitrium patens (Spreading-leaved earth moss).